The sequence spans 492 residues: NADH-quinone oxidoreductase subunit N (492 aa).

14 helical membrane passes run 13–33 (MLPV…GFWL), 43–63 (ILFV…APWA), 82–102 (AALL…LVSL), 110–132 (VSFA…IAFS), 136–155 (IVML…LATL), 169–189 (FLLG…LYGA), 210–230 (IGIL…KIAL), 245–265 (PTLV…AGML), 272–292 (LAAG…TLVI), 306–326 (LLAY…LGDT), 331–351 (AALG…LAVV), 377–397 (AVAL…AGFF), 410–430 (GYLL…VYYL), and 457–477 (VAVA…NLWY).

It belongs to the complex I subunit 2 family. As to quaternary structure, NDH-1 is composed of 15 different subunits. Subunits NuoA, H, J, K, L, M, N constitute the membrane sector of the complex.

The protein localises to the cell membrane. The enzyme catalyses a quinone + NADH + 5 H(+)(in) = a quinol + NAD(+) + 4 H(+)(out). NDH-1 shuttles electrons from NADH, via FMN and iron-sulfur (Fe-S) centers, to quinones in the respiratory chain. The immediate electron acceptor for the enzyme in this species is believed to be a menaquinone. Couples the redox reaction to proton translocation (for every two electrons transferred, four hydrogen ions are translocated across the cytoplasmic membrane), and thus conserves the redox energy in a proton gradient. This chain is NADH-quinone oxidoreductase subunit N, found in Deinococcus radiodurans (strain ATCC 13939 / DSM 20539 / JCM 16871 / CCUG 27074 / LMG 4051 / NBRC 15346 / NCIMB 9279 / VKM B-1422 / R1).